The chain runs to 446 residues: UDP-N-acetylmuramoylalanine--D-glutamate ligase (446 aa).

115-121 (GTNGKTT) provides a ligand contact to ATP.

The protein belongs to the MurCDEF family.

The protein resides in the cytoplasm. It carries out the reaction UDP-N-acetyl-alpha-D-muramoyl-L-alanine + D-glutamate + ATP = UDP-N-acetyl-alpha-D-muramoyl-L-alanyl-D-glutamate + ADP + phosphate + H(+). Its pathway is cell wall biogenesis; peptidoglycan biosynthesis. Functionally, cell wall formation. Catalyzes the addition of glutamate to the nucleotide precursor UDP-N-acetylmuramoyl-L-alanine (UMA). This Trichlorobacter lovleyi (strain ATCC BAA-1151 / DSM 17278 / SZ) (Geobacter lovleyi) protein is UDP-N-acetylmuramoylalanine--D-glutamate ligase.